Consider the following 955-residue polypeptide: Histone deacetylase 6 (955 aa).

Histone deacetylase regions lie at residues Thr-15 to Phe-337 and Met-425 to Asn-749. The 1 role is filled by His-146. His-561 (2) is an active-site residue. Residues Ser-815–Ile-840 form a disordered region. The segment covering Met-818–Ser-831 has biased composition (low complexity). A UBP-type zinc finger spans residues Ala-853–Glu-951. The Zn(2+) site is built by Cys-855, His-857, Cys-875, Cys-878, Cys-887, Cys-890, and Cys-895. Positions Gly-896 to Phe-898 are ubiquitin binding. His-902, His-906, His-912, Cys-925, and Cys-928 together coordinate Zn(2+). A ubiquitin binding region spans residues Trp-924–Tyr-931.

This sequence belongs to the histone deacetylase family. HD type 2 subfamily. It depends on Zn(2+) as a cofactor.

Its subcellular location is the nucleus. The catalysed reaction is N(6)-acetyl-L-lysyl-[histone] + H2O = L-lysyl-[histone] + acetate. In terms of biological role, probable histone deacetylase. Histone deacetylases are responsible for the deacetylation of lysine residues on the N-terminal part of the core histones (H2A, H2B, H3 and H4). Histone deacetylation gives a tag for epigenetic repression and plays an important role in transcriptional regulation, cell cycle progression and developmental events. Histone deacetylases act via the formation of large multiprotein complexes. The chain is Histone deacetylase 6 (hda-6) from Caenorhabditis elegans.